A 632-amino-acid polypeptide reads, in one-letter code: MRISWMIGGAQGSGVDTSANIFGNAVAASGYYIYGNREYYSNIKGRHSYFNLTISDKPPRSIAQQIEILTSFDAETIFQHFNEVKDVLIYSTEVENTKAEQVQSMEPEITEHVVKFLKEKGYGTTVKDVINYLKKEKGVKVIPIDYMEILKKVADQAKVQLSVADRARNTIAIAASYKLLGLKEQYLINSITRTFRQEVFAKINTIAAQLAMQQIQPMYNLPELPNNEEKINLDGNTAAAIGKIYGGLRFQSYYPITPASDESVFIEAHQTVFTVDPKTGEKRKSTIVVVQAEDELAAINMASGAALTGVRAATATSGPGFSLMVEGMGWAGMNEVPVVITYYIRGGPSTGQPTRTSQADLMFALNAGHGEFPRIVIASGDHVEAFHDGTWALNLAQKYQTPVIHLVDKALANSYSIIPKKTLGMENIRIEKGKIVINTNTPELKRFEITEDGISPFAPLGTARVHYTGDEHDEYGFIAEASENREKMYEKRIKKLMTADKEIPEESRVNVYGNTDSKVAIITWGSPKGAILDAMEELENEGIKPMLIQIRMFSPFPKNLMRKLLNGKEFIIDVESNYFGQAGEVLKLNTGIEPTHYILKWNGRPMMRDEVKEGIKAVVQKGERRVVLHGGA.

The short motif at 254–258 (YPITP) is the YPITP motif element. 2 residues coordinate substrate: threonine 257 and arginine 345.

In terms of assembly, heterodimer composed of an alpha and a beta subunit.

It catalyses the reaction a 2-oxocarboxylate + 2 oxidized [2Fe-2S]-[ferredoxin] + CoA = an acyl-CoA + 2 reduced [2Fe-2S]-[ferredoxin] + CO2 + H(+). Its function is as follows. Catalyzes the coenzyme A-dependent oxidative decarboxylation of different 2-oxoacids such as 2-oxoglutarate, pyruvate and 2-oxobutyrate to form their CoA derivatives. This is 2-oxoacid:ferredoxin oxidoreductase subunit alpha from Saccharolobus solfataricus (Sulfolobus solfataricus).